The following is an 846-amino-acid chain: MSKSFQQSSLGRDSQGHGRDLSAAGIGLLAAATQSLSMPASLGRMNQGTARLASLMNLGMSSSLNQQGAHSALSSASTSSHNLQSIFNIGSRGPLPLSSQHRGDTDQASNILASFGLSARDLDELSRYPEDKITPENLPQILLQLKRRRTEEGPTLSYGRDGRSATREPPYRVPRDDWEEKRHFRRDSFDDRGPSLNPVLDYDHGSRSQESGYYDRMDYEDDRLRDGERCRDDSFFGETSHNYHKFDSEYERMGRGPGPLQERSLFEKKRGAPPSSNIEDFHGLLPKGYPHLCSICDLPVHSNKEWSQHINGASHSRRCQLLLEIYPEWNPDNDTGHTMGDPFMLQQSTNPAPGILGPPPPSFHLGGPAVGPRGNLGAGNGNLQGPRHMQKGRVETSRVVHIMDFQRGKNLRYQLLQLVEPFGVISNHLILNKINEAFIEMATTEDAQAAVDYYTTTPALVFGKPVRVHLSQKYKRIKKPEGKPDQKFDQKQELGRVIHLSNLPHSGYSDSAVLKLAEPYGKIKNYILMRMKSQAFIEMETREDAMAMVDHCLKKALWFQGRCVKVDLSEKYKKLVLRIPNRGIDLLKKDKSRKRSYSPDGKESPSDKKSKTDAQKTESPAEGKEQEEKSGEDGEKDTKDDQTEQEPSMLLESEDELLVDEEEAAALLESGSSVGDETDLANLGDVSSDGKKEPSDKAVKKDPSASATSKKKLKKVDKIEELDQENEAALENGIKNEENTEPGAESAENADDPNKDTSENADGQNDENKEDYTIPDEYRIGPYQPNVPVGIDYVIPKTGFYCKLCSLFYTNEEVAKNTHCSSLPHYQKLKKFLNKLAEERRQKKET.

Serine 2 is modified (N-acetylserine). N6-acetyllysine; alternate is present on lysine 3. Lysine 3 is covalently cross-linked (Glycyl lysine isopeptide (Lys-Gly) (interchain with G-Cter in SUMO2); alternate). Phosphoserine is present on residues serine 4, serine 9, serine 14, serine 22, serine 41, serine 118, and serine 126. Glycyl lysine isopeptide (Lys-Gly) (interchain with G-Cter in SUMO2) cross-links involve residues lysine 132 and lysine 146. Disordered regions lie at residues 147 to 174 and 187 to 213; these read RRRT…YRVP and DSFD…ESGY. A Phosphothreonine modification is found at threonine 150. The residue at position 157 (serine 157) is a Phosphoserine. Position 158 is a phosphotyrosine (tyrosine 158). A compositionally biased stretch (basic and acidic residues) spans 160–174; sequence RDGRSATREPPYRVP. A phosphoserine mark is found at serine 164, serine 188, and serine 195. The span at 201–213 shows a compositional bias: basic and acidic residues; it reads DYDHGSRSQESGY. Tyrosine 202 carries the post-translational modification Phosphotyrosine. Residues serine 206, serine 208, and serine 211 each carry the phosphoserine modification. Residue tyrosine 219 is modified to Phosphotyrosine. Serine 234 carries the phosphoserine modification. Residue lysine 245 forms a Glycyl lysine isopeptide (Lys-Gly) (interchain with G-Cter in SUMO2) linkage. At serine 264 the chain carries Phosphoserine. Residue lysine 269 forms a Glycyl lysine isopeptide (Lys-Gly) (interchain with G-Cter in SUMO2) linkage. Serine 275 is subject to Phosphoserine. The tract at residues 342-394 is disordered; that stretch reads PFMLQQSTNPAPGILGPPPPSFHLGGPAVGPRGNLGAGNGNLQGPRHMQKGRV. One can recognise an RRM 1 domain in the interval 398-473; sequence RVVHIMDFQR…KPVRVHLSQK (76 aa). Residues lysine 478, lysine 487, and lysine 491 each participate in a glycyl lysine isopeptide (Lys-Gly) (interchain with G-Cter in SUMO2) cross-link. Residues 496–571 enclose the RRM 2 domain; that stretch reads RVIHLSNLPH…RCVKVDLSEK (76 aa). 2 positions are modified to phosphoserine: serine 509 and serine 511. Lysine 515 participates in a covalent cross-link: Glycyl lysine isopeptide (Lys-Gly) (interchain with G-Cter in SUMO2). Residue lysine 522 is modified to N6-acetyllysine; alternate. Residue lysine 522 forms a Glycyl lysine isopeptide (Lys-Gly) (interchain with G-Cter in SUMO2); alternate linkage. Serine 533 bears the Phosphoserine mark. Residues lysine 554 and lysine 555 each participate in a glycyl lysine isopeptide (Lys-Gly) (interchain with G-Cter in SUMO2) cross-link. Lysine 571 carries the post-translational modification N6-acetyllysine. The tract at residues 588–779 is disordered; that stretch reads KKDKSRKRSY…EDYTIPDEYR (192 aa). 4 positions are modified to phosphoserine: serine 596, serine 598, serine 604, and serine 606. Residues 600–642 show a composition bias toward basic and acidic residues; that stretch reads DGKESPSDKKSKTDAQKTESPAEGKEQEEKSGEDGEKDTKDDQ. Glycyl lysine isopeptide (Lys-Gly) (interchain with G-Cter in SUMO2) cross-links involve residues lysine 616 and lysine 629. The span at 652 to 664 shows a compositional bias: acidic residues; sequence ESEDELLVDEEEA. Phosphoserine occurs at positions 653, 670, 672, and 673. Low complexity predominate over residues 665-675; sequence AALLESGSSVG. At threonine 678 the chain carries Phosphothreonine. Phosphoserine is present on serine 688. Residues 688–703 are compositionally biased toward basic and acidic residues; it reads SDGKKEPSDKAVKKDP. The Nuclear localization signal signature appears at 709–717; sequence SKKKLKKVD. Glycyl lysine isopeptide (Lys-Gly) (interchain with G-Cter in SUMO2) cross-links involve residues lysine 718 and lysine 735. Threonine 740 carries the phosphothreonine modification. 2 positions are modified to phosphoserine: serine 746 and serine 758. Residues 766–779 show a composition bias toward basic and acidic residues; the sequence is DENKEDYTIPDEYR. Residue lysine 769 forms a Glycyl lysine isopeptide (Lys-Gly) (interchain with G-Cter in SUMO2) linkage. A Matrin-type zinc finger spans residues 800 to 831; that stretch reads FYCKLCSLFYTNEEVAKNTHCSSLPHYQKLKK. Position 835 is an N6-acetyllysine; alternate (lysine 835). Residue lysine 835 forms a Glycyl lysine isopeptide (Lys-Gly) (interchain with G-Cter in SUMO2); alternate linkage.

In terms of assembly, part of a complex consisting of SFPQ, NONO and MATR3. Interacts with AGO1 and AGO2. Part of a complex composed at least of ASH2L, EMSY, HCFC1, HSPA8, CCAR2, MATR3, MKI67, RBBP5, TUBB2A, WDR5 and ZNF335; this complex may have a histone H3-specific methyltransferase activity. Interacts with TARDBP. Part of the HDP-RNP complex composed of at least HEXIM1, PRKDC, XRCC5, XRCC6, paraspeckle proteins (SFPQ, NONO, PSPC1, RBM14, and MATR3) and NEAT1 RNA. Interacts with FUS. Interacts with IGF2BP1. Interacts with IGF2BP2 and IGF2BP3. Interacts with RBPMS.

The protein localises to the nucleus matrix. In terms of biological role, may play a role in transcription or may interact with other nuclear matrix proteins to form the internal fibrogranular network. In association with the SFPQ-NONO heteromer may play a role in nuclear retention of defective RNAs. Plays a role in the regulation of DNA virus-mediated innate immune response by assembling into the HDP-RNP complex, a complex that serves as a platform for IRF3 phosphorylation and subsequent innate immune response activation through the cGAS-STING pathway. Binds to N6-methyladenosine (m6A)-containing mRNAs and contributes to MYC stability by binding to m6A-containing MYC mRNAs. May bind to specific miRNA hairpins. The chain is Matrin-3 (Matr3) from Mus musculus (Mouse).